Reading from the N-terminus, the 316-residue chain is Methionyl-tRNA formyltransferase (316 aa).

109–112 (SLLP) is a binding site for (6S)-5,6,7,8-tetrahydrofolate.

This sequence belongs to the Fmt family.

It catalyses the reaction L-methionyl-tRNA(fMet) + (6R)-10-formyltetrahydrofolate = N-formyl-L-methionyl-tRNA(fMet) + (6S)-5,6,7,8-tetrahydrofolate + H(+). Functionally, attaches a formyl group to the free amino group of methionyl-tRNA(fMet). The formyl group appears to play a dual role in the initiator identity of N-formylmethionyl-tRNA by promoting its recognition by IF2 and preventing the misappropriation of this tRNA by the elongation apparatus. In Idiomarina loihiensis (strain ATCC BAA-735 / DSM 15497 / L2-TR), this protein is Methionyl-tRNA formyltransferase.